Consider the following 1161-residue polypeptide: Immunoglobulin superfamily member 3 (1161 aa).

The signal sequence occupies residues 1 to 16 (MGTAALLILLAGVSWA). Topologically, residues 17–1091 (QREVAIQPGP…LQSTICANDA (1075 aa)) are extracellular. 8 Ig-like C2-type domains span residues 18–135 (REVA…AKVN), 140–258 (PDTL…WFPL), 272–382 (PTDK…RGPS), 402–523 (PLRT…WQLL), 541–651 (FAVT…RETS), 674–796 (PRLQ…EETS), 806–930 (PDAN…WYRR), and 947–1063 (PQLQ…WYLL). Disulfide bonds link Cys-39/Cys-117 and Cys-164/Cys-242. The EWI motif motif lies at 246–248 (EWI). 6 cysteine pairs are disulfide-bonded: Cys-298–Cys-372, Cys-428–Cys-507, Cys-562–Cys-641, Cys-697–Cys-775, Cys-831–Cys-914, and Cys-970–Cys-1047. The helical transmembrane segment at 1092-1112 (LFYLVFFYPFPIFGILIITIL) threads the bilayer. The Cytoplasmic portion of the chain corresponds to 1113 to 1161 (LVRFRHRPTGKPGEGKNGVPLLWIKEPHLNYSPTCLEPPVLSIHPGTID).

It localises to the membrane. In Xenopus tropicalis (Western clawed frog), this protein is Immunoglobulin superfamily member 3 (igsf3).